The chain runs to 217 residues: 3,4-dihydroxy-2-butanone 4-phosphate synthase (217 aa).

D-ribulose 5-phosphate contacts are provided by residues 37-38, Asp-42, 150-154, and Glu-174; these read RE and RGGHT. Position 38 (Glu-38) interacts with Mg(2+). Position 153 (His-153) interacts with Mg(2+).

The protein belongs to the DHBP synthase family. Homodimer. Mg(2+) is required as a cofactor. It depends on Mn(2+) as a cofactor.

The enzyme catalyses D-ribulose 5-phosphate = (2S)-2-hydroxy-3-oxobutyl phosphate + formate + H(+). The protein operates within cofactor biosynthesis; riboflavin biosynthesis; 2-hydroxy-3-oxobutyl phosphate from D-ribulose 5-phosphate: step 1/1. In terms of biological role, catalyzes the conversion of D-ribulose 5-phosphate to formate and 3,4-dihydroxy-2-butanone 4-phosphate. This Salmonella arizonae (strain ATCC BAA-731 / CDC346-86 / RSK2980) protein is 3,4-dihydroxy-2-butanone 4-phosphate synthase.